The following is an 85-amino-acid chain: Large ribosomal subunit protein bL27 (85 aa).

Residues 1–21 (MAHKKGVGSTRNGRDSDGQRL) are disordered.

Belongs to the bacterial ribosomal protein bL27 family.

The protein is Large ribosomal subunit protein bL27 of Geotalea uraniireducens (strain Rf4) (Geobacter uraniireducens).